Consider the following 300-residue polypeptide: Cation-efflux pump FieF (300 aa).

6 consecutive transmembrane segments (helical) span residues 12-32, 39-59, 82-102, 114-134, 151-171, and 172-192; these read AAIA…FAWW, ILAA…NLLV, AALA…LTGI, PGVG…LVSF, MLHY…LALS, and WYGW…YILY. Zn(2+) contacts are provided by Asp45 and Asp49. Zn(2+) contacts are provided by His153 and Asp157.

The protein belongs to the cation diffusion facilitator (CDF) transporter (TC 2.A.4) family. FieF subfamily. In terms of assembly, homodimer.

It is found in the cell inner membrane. The enzyme catalyses Zn(2+)(in) + H(+)(out) = Zn(2+)(out) + H(+)(in). It carries out the reaction Cd(2+)(in) + H(+)(out) = Cd(2+)(out) + H(+)(in). The catalysed reaction is Fe(2+)(in) + H(+)(out) = Fe(2+)(out) + H(+)(in). Functionally, divalent metal cation transporter which exports Zn(2+), Cd(2+) and possibly Fe(2+). May be involved in zinc and iron detoxification by efflux. This Escherichia fergusonii (strain ATCC 35469 / DSM 13698 / CCUG 18766 / IAM 14443 / JCM 21226 / LMG 7866 / NBRC 102419 / NCTC 12128 / CDC 0568-73) protein is Cation-efflux pump FieF.